Here is a 213-residue protein sequence, read N- to C-terminus: Membrane-spanning 4-domains subfamily A member 3 (213 aa).

Residues 1–26 (MKPEETGGSVYQPLDESRHVQRGVLQ) are Cytoplasmic-facing. A helical transmembrane segment spans residues 27-47 (ALGAIQILNGILILALGIFLV). The Extracellular segment spans residues 48-58 (CLQHVSHHFRH). Residues 59–79 (FFFFTFYTGYPLWGAVFFISS) form a helical membrane-spanning segment. Residues 80-97 (GSLTVAAGRNPTRMLMQN) lie on the Cytoplasmic side of the membrane. Residues 98–118 (SFGINIASTTIAFVGTVFLSV) traverse the membrane as a helical segment. Over 119 to 148 (HLAFNTQAFKGCQSSPSPDVCISLGSSSDG) the chain is Extracellular. Residues 149 to 169 (LVSLMLILTLLELSVTISISA) form a helical membrane-spanning segment. The Cytoplasmic segment spans residues 170-213 (MWCLGNVCGLREAITSPPNSVESGILPEGSDSENLNTQPQASEE). The disordered stretch occupies residues 189 to 213 (SVESGILPEGSDSENLNTQPQASEE). Residues 201 to 213 (SENLNTQPQASEE) show a composition bias toward polar residues.

Belongs to the MS4A family. As to quaternary structure, interacts with CDKN3. Interacts with CDKN3-CDK2 complexes through its binding to CDKN3; this interaction facilitates dissociation of cyclin A from CDKN3-CDK2 complexes. In terms of tissue distribution, expressed at low levels only in specific immune tissues, such as, spleen, bone marrow and peripheral blood leukocytes.

It localises to the membrane. Functionally, hematopoietic modulator for the G1-S cell cycle transition. Modulates the level of phosphorylation of cyclin-dependent kinase 2 (CDK2) through its direct binding to cyclin-dependent kinase inhibitor 3 (CDKN3/KAP). This Mus musculus (Mouse) protein is Membrane-spanning 4-domains subfamily A member 3 (Ms4a3).